The chain runs to 409 residues: Snake venom metalloproteinase BITM02A (409 aa).

Residues 1–20 form the signal peptide; sequence MIEVLLVTICLAAFPYQGSS. Positions 21 to 189 are excised as a propeptide; the sequence is IILESGNVND…KKASQSNLTP (169 aa). The region spanning 193–389 is the Peptidase M12B domain; that stretch reads RYIELFIVVD…ENPQCILNKR (197 aa). Glutamate 196 and aspartate 280 together coordinate Ca(2+). 3 disulfides stabilise this stretch: cysteine 304-cysteine 384, cysteine 344-cysteine 368, and cysteine 346-cysteine 351. Residue histidine 329 participates in Zn(2+) binding. Glutamate 330 is a catalytic residue. Positions 333 and 339 each coordinate Zn(2+). Positions 384, 387, 399, 402, 404, 406, and 409 each coordinate Ca(2+). Residues 390–409 constitute a propeptide that is removed on maturation; it reads LRTDTVSTPVSGNELLEAGE.

Belongs to the venom metalloproteinase (M12B) family. P-I subfamily. As to quaternary structure, monomer. Zn(2+) serves as cofactor. In terms of tissue distribution, expressed by the venom gland.

Its subcellular location is the secreted. In terms of biological role, snake venom metalloproteinase that impairs hemostasis in the envenomed animal. The protein is Snake venom metalloproteinase BITM02A of Bothrops insularis (Golden lancehead).